We begin with the raw amino-acid sequence, 128 residues long: uncharacterized protein (128 aa).

This is an uncharacterized protein from Enterobacteria phage LZ3 (Bacteriophage LZ3).